A 507-amino-acid polypeptide reads, in one-letter code: Histidine ammonia-lyase (507 aa).

A cross-link (5-imidazolinone (Ala-Gly)) is located at residues 141–143; that stretch reads ASG. Residue Ser-142 is modified to 2,3-didehydroalanine (Ser).

The protein belongs to the PAL/histidase family. Contains an active site 4-methylidene-imidazol-5-one (MIO), which is formed autocatalytically by cyclization and dehydration of residues Ala-Ser-Gly.

It localises to the cytoplasm. The catalysed reaction is L-histidine = trans-urocanate + NH4(+). It functions in the pathway amino-acid degradation; L-histidine degradation into L-glutamate; N-formimidoyl-L-glutamate from L-histidine: step 1/3. This is Histidine ammonia-lyase from Cereibacter sphaeroides (strain ATCC 17023 / DSM 158 / JCM 6121 / CCUG 31486 / LMG 2827 / NBRC 12203 / NCIMB 8253 / ATH 2.4.1.) (Rhodobacter sphaeroides).